The chain runs to 415 residues: Serine hydroxymethyltransferase (415 aa).

(6S)-5,6,7,8-tetrahydrofolate contacts are provided by residues leucine 121 and 125-127; that span reads GHL. At lysine 230 the chain carries N6-(pyridoxal phosphate)lysine. 355 to 357 contributes to the (6S)-5,6,7,8-tetrahydrofolate binding site; the sequence is SPF.

Belongs to the SHMT family. Homodimer. Pyridoxal 5'-phosphate serves as cofactor.

Its subcellular location is the cytoplasm. It carries out the reaction (6R)-5,10-methylene-5,6,7,8-tetrahydrofolate + glycine + H2O = (6S)-5,6,7,8-tetrahydrofolate + L-serine. It participates in one-carbon metabolism; tetrahydrofolate interconversion. It functions in the pathway amino-acid biosynthesis; glycine biosynthesis; glycine from L-serine: step 1/1. Functionally, catalyzes the reversible interconversion of serine and glycine with tetrahydrofolate (THF) serving as the one-carbon carrier. This reaction serves as the major source of one-carbon groups required for the biosynthesis of purines, thymidylate, methionine, and other important biomolecules. Also exhibits THF-independent aldolase activity toward beta-hydroxyamino acids, producing glycine and aldehydes, via a retro-aldol mechanism. The polypeptide is Serine hydroxymethyltransferase (Lactococcus lactis subsp. cremoris (strain MG1363)).